A 372-amino-acid chain; its full sequence is Neuropeptide S receptor (372 aa).

Residues 1-52 (MPANLTEGSFHANQTVPMLDSSPVACTEIVTFTEALEAEEWGSFYSSFKTEQ) are Extracellular-facing. Asn4 and Asn13 each carry an N-linked (GlcNAc...) asparagine glycan. Residues 53–73 (LITLWVLFVFTIVGNSVVLFS) form a helical membrane-spanning segment. Residues 74 to 82 (TWRRKRKSR) are Cytoplasmic-facing. A helical membrane pass occupies residues 83–103 (MTFFVTQLAITDSFTGLINIL). Residues 104-122 (TDIIWRFTGDFMAPDLVCR) lie on the Extracellular side of the membrane. A disulfide bridge connects residues Cys121 and Cys198. A helical transmembrane segment spans residues 123–143 (IVRYLQVVLLYASTYVLVSLS). At 144-165 (IDRYHAIVYPMKFLQGAEKQAK) the chain is on the cytoplasmic side. Residues 166 to 186 (VLIGIAWSLSFLFSIPTLIIF) form a helical membrane-spanning segment. Over 187–213 (GKRTLSNGEVQCWALWPDDSYWTPYMT) the chain is Extracellular. A helical membrane pass occupies residues 214–234 (IVAFLVYFIPLTIISVIYGLV). At 235–276 (IRTIWIKSKAHETVISNCSDGELCCSYNRGLISKAKIKAIKY) the chain is on the cytoplasmic side. The chain crosses the membrane as a helical span at residues 277-297 (SIVIILAFICCWSPYFLFDML). The Extracellular segment spans residues 298–313 (DNFNLLPDTKERFYAS). Residues 314–334 (VIIQNLPALNSAINPLIYCIF) traverse the membrane as a helical segment. Residues 335 to 372 (SGSLCSPCKVQRSQDSRMTYRERSERHEMQILSKPEFI) lie on the Cytoplasmic side of the membrane.

Belongs to the G-protein coupled receptor 1 family. Vasopressin/oxytocin receptor subfamily.

The protein resides in the cell membrane. In terms of biological role, G-protein coupled receptor for neuropeptide S (NPS). Promotes mobilization of intracellular Ca(2+) stores. Inhibits cell growth in response to NPS binding. Involved in pathogenesis of asthma and other IgE-mediated diseases. This Rattus norvegicus (Rat) protein is Neuropeptide S receptor (Npsr1).